The primary structure comprises 189 residues: Interferon alpha-8 (189 aa).

Residues methionine 1–glycine 23 form the signal peptide. Disulfide bonds link cysteine 24–cysteine 122 and cysteine 52–cysteine 162.

The protein belongs to the alpha/beta interferon family.

It localises to the secreted. Functionally, produced by macrophages, IFN-alpha have antiviral activities. Interferon stimulates the production of two enzymes: a protein kinase and an oligoadenylate synthetase. The protein is Interferon alpha-8 (IFNA8) of Homo sapiens (Human).